Here is a 241-residue protein sequence, read N- to C-terminus: 1-(5-phosphoribosyl)-5-[(5-phosphoribosylamino)methylideneamino] imidazole-4-carboxamide isomerase (241 aa).

The active-site Proton acceptor is the Asp10. The active-site Proton donor is the Asp131.

Belongs to the HisA/HisF family.

The protein localises to the cytoplasm. The catalysed reaction is 1-(5-phospho-beta-D-ribosyl)-5-[(5-phospho-beta-D-ribosylamino)methylideneamino]imidazole-4-carboxamide = 5-[(5-phospho-1-deoxy-D-ribulos-1-ylimino)methylamino]-1-(5-phospho-beta-D-ribosyl)imidazole-4-carboxamide. It functions in the pathway amino-acid biosynthesis; L-histidine biosynthesis; L-histidine from 5-phospho-alpha-D-ribose 1-diphosphate: step 4/9. The protein is 1-(5-phosphoribosyl)-5-[(5-phosphoribosylamino)methylideneamino] imidazole-4-carboxamide isomerase of Bifidobacterium longum subsp. infantis (strain ATCC 15697 / DSM 20088 / JCM 1222 / NCTC 11817 / S12).